Consider the following 329-residue polypeptide: Formimidoylglutamase (329 aa).

The Mn(2+) site is built by His133, Asp159, His161, Asp163, Asp253, and Asp255.

It belongs to the arginase family. Mn(2+) serves as cofactor.

It catalyses the reaction N-formimidoyl-L-glutamate + H2O = formamide + L-glutamate. It functions in the pathway amino-acid degradation; L-histidine degradation into L-glutamate; L-glutamate from N-formimidoyl-L-glutamate (hydrolase route): step 1/1. Catalyzes the conversion of N-formimidoyl-L-glutamate to L-glutamate and formamide. This is Formimidoylglutamase from Streptococcus gordonii (strain Challis / ATCC 35105 / BCRC 15272 / CH1 / DL1 / V288).